The sequence spans 717 residues: ATP-dependent zinc metalloprotease FtsH (717 aa).

The Cytoplasmic segment spans residues 1 to 7 (MFKDKKM). A helical transmembrane segment spans residues 8-28 (LKYIVIYSIIAFGILLTFNMV). The Extracellular segment spans residues 29 to 109 (KDEMLYEKVD…VEFNVTKPEN (81 aa)). A helical transmembrane segment spans residues 110-130 (YQLLGLLMSWVFPLILIFFVG). Over 131 to 717 (RMMFSKMNNK…SSTNNKVDGE (587 aa)) the chain is Cytoplasmic. 206 to 213 (GPPGTGKT) provides a ligand contact to ATP. Histidine 427 provides a ligand contact to Zn(2+). Glutamate 428 is an active-site residue. Histidine 431 and aspartate 504 together coordinate Zn(2+). The tract at residues 670 to 717 (KLARANNEANNDALDSSKENEEVKSNVNDGATEEKKDDSSTNNKVDGE) is disordered. Basic and acidic residues-rich tracts occupy residues 684–693 (DSSKENEEVK) and 701–717 (TEEK…VDGE).

The protein in the central section; belongs to the AAA ATPase family. This sequence in the C-terminal section; belongs to the peptidase M41 family. As to quaternary structure, homohexamer. Zn(2+) serves as cofactor.

The protein resides in the cell membrane. Its function is as follows. Acts as a processive, ATP-dependent zinc metallopeptidase for both cytoplasmic and membrane proteins. Plays a role in the quality control of integral membrane proteins. This is ATP-dependent zinc metalloprotease FtsH from Clostridium perfringens (strain ATCC 13124 / DSM 756 / JCM 1290 / NCIMB 6125 / NCTC 8237 / Type A).